We begin with the raw amino-acid sequence, 115 residues long: Large ribosomal subunit protein bL19 (115 aa).

The protein belongs to the bacterial ribosomal protein bL19 family.

Functionally, this protein is located at the 30S-50S ribosomal subunit interface and may play a role in the structure and function of the aminoacyl-tRNA binding site. The sequence is that of Large ribosomal subunit protein bL19 from Aeromonas hydrophila subsp. hydrophila (strain ATCC 7966 / DSM 30187 / BCRC 13018 / CCUG 14551 / JCM 1027 / KCTC 2358 / NCIMB 9240 / NCTC 8049).